The chain runs to 396 residues: Elongation factor Tu 1 (396 aa).

In terms of domain architecture, tr-type G spans 10-206 (KPHVNVGTIG…ALDTYIPTPE (197 aa)). The interval 19 to 26 (GHVDHGKT) is G1. Position 19–26 (19–26 (GHVDHGKT)) interacts with GTP. A Mg(2+)-binding site is contributed by Thr26. Residues 60–64 (GITIN) are G2. The tract at residues 81 to 84 (DCPG) is G3. Residues 81-85 (DCPGH) and 136-139 (NKCD) contribute to the GTP site. Residues 136–139 (NKCD) are G4. Residues 174-176 (SAK) are G5.

This sequence belongs to the TRAFAC class translation factor GTPase superfamily. Classic translation factor GTPase family. EF-Tu/EF-1A subfamily. Monomer.

Its subcellular location is the cytoplasm. It carries out the reaction GTP + H2O = GDP + phosphate + H(+). Functionally, GTP hydrolase that promotes the GTP-dependent binding of aminoacyl-tRNA to the A-site of ribosomes during protein biosynthesis. This chain is Elongation factor Tu 1, found in Acidovorax sp. (strain JS42).